The primary structure comprises 202 residues: Protein-methionine-sulfoxide reductase heme-binding subunit MsrQ (202 aa).

The next 6 helical transmembrane spans lie at 8–28 (LAVF…AWIF), 42–62 (LGLG…LQKL), 75–95 (LGLW…VFIL), 110–130 (PYII…ITSN), 147–167 (LVYL…RADL), and 169–189 (EWTL…PSIA).

It belongs to the MsrQ family. In terms of assembly, heterodimer of a catalytic subunit (MsrP) and a heme-binding subunit (MsrQ). It depends on FMN as a cofactor. Requires heme b as cofactor.

The protein resides in the cell inner membrane. Functionally, part of the MsrPQ system that repairs oxidized periplasmic proteins containing methionine sulfoxide residues (Met-O), using respiratory chain electrons. Thus protects these proteins from oxidative-stress damage caused by reactive species of oxygen and chlorine generated by the host defense mechanisms. MsrPQ is essential for the maintenance of envelope integrity under bleach stress, rescuing a wide series of structurally unrelated periplasmic proteins from methionine oxidation. MsrQ provides electrons for reduction to the reductase catalytic subunit MsrP, using the quinone pool of the respiratory chain. The sequence is that of Protein-methionine-sulfoxide reductase heme-binding subunit MsrQ from Pseudomonas paraeruginosa (strain DSM 24068 / PA7) (Pseudomonas aeruginosa (strain PA7)).